The following is a 631-amino-acid chain: Leukocyte immunoglobulin-like receptor subfamily B member 3 (631 aa).

The N-terminal stretch at 1–23 is a signal peptide; it reads MTPALTALLCLGLSLGPRTRVQA. Residues 24–443 lie on the Extracellular side of the membrane; sequence GPFPKPTLWA…STPGLGRYLE (420 aa). Ig-like C2-type domains follow at residues 42 to 100, 111 to 229, 225 to 314, and 338 to 419; these read GSPV…RCHY, DPLE…SLLT, PSLL…DPLN, and GENV…LVVS. An intrachain disulfide couples C49 to C98. Residues 59 to 70 show a composition bias toward basic and acidic residues; that stretch reads RLHKEGSPEPLD. A disordered region spans residues 59 to 78; sequence RLHKEGSPEPLDRNNPLEPK. Residue N139 is glycosylated (N-linked (GlcNAc...) asparagine). 2 disulfide bridges follow: C144/C196 and C245/C296. 3 N-linked (GlcNAc...) asparagine glycosylation sites follow: N280, N301, and N340. A disulfide bond links C345 and C396. The helical transmembrane segment at 444–464 threads the bilayer; sequence VLIGVSVAFVLLLFLLLFLLL. At 465–631 the chain is on the cytoplasmic side; the sequence is RRQRHSKHRT…PSIYATLAIH (167 aa). The segment at 470-631 is disordered; it reads SKHRTSDQRK…PSIYATLAIH (162 aa). Residues 473–482 show a composition bias toward basic and acidic residues; sequence RTSDQRKTDF. The ITIM motif 1 motif lies at 512–517; the sequence is NLYAAV. Composition is skewed to basic and acidic residues over residues 520–537 and 567–581; these read TQSEDRVELDSQSPHDED and LDTKDRQVEEDRQMD. Over residues 588–600 the composition is skewed to polar residues; the sequence is EASQDVTYAQLHS. 2 short sequence motifs (ITIM motif) span residues 593-598 and 623-628; these read VTYAQL and SIYATL. A phosphotyrosine; by LYN mark is found at Y595 and Y625.

As to quaternary structure, interacts with LYN, PTPN6/SHP-1 and PTPN11/SHP-2. In terms of processing, phosphorylated on tyrosine residues by LYN. Phosphorylation at Tyr-595 and Tyr-625 is important for interaction with PTPN6/SHP-1 and PTPN11/SHP-2. As to expression, detected in monocytes and B-cells.

Its subcellular location is the cell membrane. In terms of biological role, may act as receptor for class I MHC antigens. Becomes activated upon coligation of LILRB3 and immune receptors, such as FCGR2B and the B-cell receptor. Down-regulates antigen-induced B-cell activation by recruiting phosphatases to its immunoreceptor tyrosine-based inhibitor motifs (ITIM). This Homo sapiens (Human) protein is Leukocyte immunoglobulin-like receptor subfamily B member 3 (LILRB3).